The following is a 999-amino-acid chain: Hypoxia up-regulated protein 1 (999 aa).

Residues 1 to 32 (MAATVRRQRPRRLLCWALVAVLLADLLALSDT) form the signal peptide. Asn155, Asn222, and Asn515 each carry an N-linked (GlcNAc...) asparagine glycan. A Phosphoserine modification is found at Ser567. Positions 567–694 (SPEEESTLTK…KKPKPARKQK (128 aa)) are disordered. The segment covering 574–583 (LTKLGNTISS) has biased composition (polar residues). N-linked (GlcNAc...) asparagine glycosylation is present at Asn596. Basic and acidic residues-rich tracts occupy residues 611 to 626 (GSKD…KEEA) and 641 to 668 (PKGD…KPNE). Residues 669 to 680 (KGQAGPEGAAPA) are compositionally biased toward low complexity. N-linked (GlcNAc...) asparagine glycans are attached at residues Asn830, Asn862, and Asn869. Lys883 is modified (N6-acetyllysine). The interval 909 to 999 (AKFTKPRPRP…QKRPSKNDEL (91 aa)) is disordered. Residues Asn922 and Asn931 are each glycosylated (N-linked (GlcNAc...) asparagine). A compositionally biased stretch (basic and acidic residues) spans 949–962 (EEAKPILEPDKEET). A Prevents secretion from ER motif is present at residues 996–999 (NDEL).

It belongs to the heat shock protein 70 family. As to quaternary structure, part of a large chaperone multiprotein complex comprising DNAJB11, HSP90B1, HSPA5, HYOU, PDIA2, PDIA4, PDIA6, PPIB, SDF2L1, UGGT1 and very small amounts of ERP29, but not, or at very low levels, CALR nor CANX.

It localises to the endoplasmic reticulum lumen. Functionally, has a pivotal role in cytoprotective cellular mechanisms triggered by oxygen deprivation. Promotes HSPA5/BiP-mediated ATP nucleotide exchange and thereby activates the unfolded protein response (UPR) pathway in the presence of endoplasmic reticulum stress. May play a role as a molecular chaperone and participate in protein folding. The protein is Hypoxia up-regulated protein 1 (Hyou1) of Mus musculus (Mouse).